We begin with the raw amino-acid sequence, 401 residues long: Transcription factor atf-2 (401 aa).

Residues S19 to S38 show a composition bias toward low complexity. Residues S19 to N78 are disordered. Basic and acidic residues predominate over residues E41–N78. The bZIP 1 domain maps to D54 to L100. Residues R60–K85 are basic motif 1. The leucine-zipper 1 stretch occupies residues L89–L96. Low complexity predominate over residues S181 to S211. Disordered regions lie at residues S181–V256 and Q273–R345. Composition is skewed to polar residues over residues D222–V256 and Q273–S283. Over residues E305 to H317 the composition is skewed to low complexity. The region spanning S329–R392 is the bZIP 2 domain. Residues R335–R360 form a basic motif 2 region. Positions V361–V388 form a coiled coil. The segment at L364–L378 is leucine-zipper 2.

It belongs to the bZIP family. Interacts with cell death specification protein ces-2. In terms of processing, phosphorylated by mitogen-activated protein kinases pmk-2 and pmk-3. May be responsive to osmotic stress.

The protein resides in the nucleus. Acts as a transcription factor that recognizes and binds to the sequence 5'-[GA]TTA[CT]GTAA[CT]-3', a sequence present in many promoters. Involved in the development of the excretory duct cell, by positively modulating embryonic transcription of putative transcription factor lin-48, acting in concert with cell death specification protein ces-2. Negatively modulates expression of key autophagy-related genes, bec-1/ATG6 and lgg-1/ATG8, and may link together autophagy and apoptosis during development. Positively modulates expression of neuropeptide pigment dispersing factor homologs pdf-1 and pdf-2. The chain is Transcription factor atf-2 from Caenorhabditis elegans.